A 418-amino-acid chain; its full sequence is Actin-related protein 3B (418 aa).

It belongs to the actin family. ARP3 subfamily. As to quaternary structure, interacts with the Arp2/3 complex composed of ARP2, ARP3, ARPC1B, ARPC1B/p41-ARC, ARPC2/p34-ARC, ARPC3/p21-ARC, ARPC4/p20-ARC and ARPC5/p16-ARC. In terms of tissue distribution, detected in fetal brain. Detected throughout the adult brain, in neurons from gray matter, but not in white matter. Detected in liver, skeletal muscle and pancreas. Detected in lung adenocarcinoma cells with low metastatic potential, but not in lung adenocarcinoma cells with high metastatic potential.

It is found in the cytoplasm. The protein resides in the cytoskeleton. The protein localises to the cell projection. Its function is as follows. Plays a role in the organization of the actin cytoskeleton. May function as ATP-binding component of the Arp2/3 complex which is involved in regulation of actin polymerization and together with an activating nucleation-promoting factor (NPF) mediates the formation of branched actin networks. May decrease the metastatic potential of tumors. The protein is Actin-related protein 3B (ACTR3B) of Homo sapiens (Human).